We begin with the raw amino-acid sequence, 257 residues long: Uroporphyrinogen-III C-methyltransferase (257 aa).

Residues Pro11, 87 to 89 (GGD), 117 to 118 (TS), and Met170 each bind S-adenosyl-L-homocysteine.

Belongs to the precorrin methyltransferase family.

It catalyses the reaction uroporphyrinogen III + 2 S-adenosyl-L-methionine = precorrin-2 + 2 S-adenosyl-L-homocysteine + H(+). It participates in cofactor biosynthesis; adenosylcobalamin biosynthesis; precorrin-2 from uroporphyrinogen III: step 1/1. The protein operates within porphyrin-containing compound metabolism; siroheme biosynthesis; precorrin-2 from uroporphyrinogen III: step 1/1. Its function is as follows. Catalyzes the two successive C-2 and C-7 methylation reactions involved in the conversion of uroporphyrinogen III to precorrin-2 via the intermediate formation of precorrin-1. It is a step in the biosynthesis of both cobalamin (vitamin B12) and siroheme. In Bacillus subtilis (strain 168), this protein is Uroporphyrinogen-III C-methyltransferase (sumT).